We begin with the raw amino-acid sequence, 339 residues long: D-alanine--D-alanine ligase (339 aa).

The region spanning 115-327 is the ATP-grasp domain; it reads KHIFRSLGID…FNELVKIIIE (213 aa). Residue 142 to 211 participates in ATP binding; the sequence is KIDYPYVLKP…EEYIPGIELH (70 aa). Asp-279, Glu-293, and Asn-295 together coordinate Mg(2+).

It belongs to the D-alanine--D-alanine ligase family. Mg(2+) serves as cofactor. It depends on Mn(2+) as a cofactor.

The protein resides in the cytoplasm. It catalyses the reaction 2 D-alanine + ATP = D-alanyl-D-alanine + ADP + phosphate + H(+). It participates in cell wall biogenesis; peptidoglycan biosynthesis. Cell wall formation. In Wolbachia sp. subsp. Brugia malayi (strain TRS), this protein is D-alanine--D-alanine ligase.